The chain runs to 157 residues: uncharacterized protein (157 aa).

This is an uncharacterized protein from Aquifex aeolicus (strain VF5).